A 157-amino-acid polypeptide reads, in one-letter code: Transcriptional repressor NrdR (157 aa).

Residues 1 to 21 (MKCPNCHKNGSRVVDSRPADN) form a disordered region. A zinc finger lies at 3 to 34 (CPNCHKNGSRVVDSRPADNGHAIRRRRECEQC). One can recognise an ATP-cone domain in the interval 49 to 139 (LLVIKKNGTR…VYREFKDMHA (91 aa)).

The protein belongs to the NrdR family. It depends on Zn(2+) as a cofactor.

Functionally, negatively regulates transcription of bacterial ribonucleotide reductase nrd genes and operons by binding to NrdR-boxes. The sequence is that of Transcriptional repressor NrdR from Ligilactobacillus salivarius (strain UCC118) (Lactobacillus salivarius).